The chain runs to 996 residues: P3N-PIPO polyprotein (996 aa).

Residues V173–Y313 form the Peptidase S30 domain. Catalysis depends on for P1 proteinase activity residues H226, E235, and S267. Residues K365–C368 carry the Involved in interaction with stylet and aphid transmission motif. The Involved in virions binding and aphid transmission motif lies at P621 to K623. In terms of domain architecture, Peptidase C6 spans M647 to G769. Residues C655 and H728 each act as for helper component proteinase activity in the active site.

It belongs to the potyviridae P3N-PIPO polyprotein family. In terms of assembly, interacts (via PIPO domain) with host PCaP1 protein; this interaction may help to anchor the movement complex to the plasma membrane from which the complex could move to the plasmodesmata. Post-translationally, potyviral RNA is expressed as two polyproteins which undergo post-translational proteolytic processing. Genome polyprotein is processed by NIa-pro, P1 and HC-pro proteinases resulting in the production of at least ten individual proteins. P3N-PIPO is cleaved by P1 and HC-pro proteinases resulting in the production of three individual proteins. The P1 proteinase and the HC-pro cleave only their respective C-termini autocatalytically.

Its subcellular location is the host cell junction. It is found in the host plasmodesma. The catalysed reaction is Hydrolyzes a Gly-|-Gly bond at its own C-terminus, commonly in the sequence -Tyr-Xaa-Val-Gly-|-Gly, in the processing of the potyviral polyprotein.. In terms of biological role, required for aphid transmission and also has proteolytic activity. Only cleaves a Gly-Gly dipeptide at its own C-terminus. Interacts with virions and aphid stylets. Acts as a suppressor of RNA-mediated gene silencing, also known as post-transcriptional gene silencing (PTGS), a mechanism of plant viral defense that limits the accumulation of viral RNAs. May have RNA-binding activity. Its function is as follows. Allows efficient cell to cell propagation, by bypassing the host cell wall barrier. Transports viral genome to neighboring plant cells directly through plasmosdesmata, without any budding. In Zucchini yellow mosaic virus (strain Reunion Island) (ZYMV), this protein is P3N-PIPO polyprotein.